The following is a 289-amino-acid chain: 2,3-dimethylmalate lyase (289 aa).

It belongs to the isocitrate lyase/PEP mutase superfamily. As to quaternary structure, homotetramer. Mg(2+) is required as a cofactor.

It catalyses the reaction (2R,3S)-2,3-dimethylmalate = propanoate + pyruvate. The protein operates within cofactor degradation; nicotinate degradation; propanoate and pyruvate from 6-hydroxynicotinate: step 8/8. Its activity is regulated as follows. Completely inhibited by propionic anhydride and by cystamine. Irreversibly inhibited by the mercapto reagents iodoacetate and iodoacetamide. Unaffected by hydroxylamine. Its function is as follows. Catalyzes the formation of proponate and pyruvate from (2R,3S)-2,3-dimethylmalate. Has no activity toward dimethylmaleate, malate, citramalate, isocitrate and citrate. This chain is 2,3-dimethylmalate lyase, found in Eubacterium barkeri (Clostridium barkeri).